The following is a 39-amino-acid chain: Photosystem II reaction center protein J (39 aa).

Residues 9–29 (LWIIATFGGIAALTVVGLFIY) form a helical membrane-spanning segment.

Belongs to the PsbJ family. In terms of assembly, PSII is composed of 1 copy each of membrane proteins PsbA, PsbB, PsbC, PsbD, PsbE, PsbF, PsbH, PsbI, PsbJ, PsbK, PsbL, PsbM, PsbT, PsbX, PsbY, PsbZ, Psb30/Ycf12, at least 3 peripheral proteins of the oxygen-evolving complex and a large number of cofactors. It forms dimeric complexes.

The protein resides in the plastid. The protein localises to the chloroplast thylakoid membrane. Its function is as follows. One of the components of the core complex of photosystem II (PSII). PSII is a light-driven water:plastoquinone oxidoreductase that uses light energy to abstract electrons from H(2)O, generating O(2) and a proton gradient subsequently used for ATP formation. It consists of a core antenna complex that captures photons, and an electron transfer chain that converts photonic excitation into a charge separation. In Guillardia theta (Cryptophyte), this protein is Photosystem II reaction center protein J.